Here is a 377-residue protein sequence, read N- to C-terminus: Succinyl-diaminopimelate desuccinylase (377 aa).

Position 66 (histidine 66) interacts with Zn(2+). Aspartate 68 is an active-site residue. Aspartate 99 is a Zn(2+) binding site. Catalysis depends on glutamate 133, which acts as the Proton acceptor. 3 residues coordinate Zn(2+): glutamate 134, glutamate 162, and histidine 348.

Belongs to the peptidase M20A family. DapE subfamily. In terms of assembly, homodimer. Requires Zn(2+) as cofactor. The cofactor is Co(2+).

It carries out the reaction N-succinyl-(2S,6S)-2,6-diaminopimelate + H2O = (2S,6S)-2,6-diaminopimelate + succinate. Its pathway is amino-acid biosynthesis; L-lysine biosynthesis via DAP pathway; LL-2,6-diaminopimelate from (S)-tetrahydrodipicolinate (succinylase route): step 3/3. In terms of biological role, catalyzes the hydrolysis of N-succinyl-L,L-diaminopimelic acid (SDAP), forming succinate and LL-2,6-diaminopimelate (DAP), an intermediate involved in the bacterial biosynthesis of lysine and meso-diaminopimelic acid, an essential component of bacterial cell walls. The protein is Succinyl-diaminopimelate desuccinylase of Xylella fastidiosa (strain M23).